The chain runs to 465 residues: Chromosomal replication initiator protein DnaA (465 aa).

Positions 1 to 85 (MSGFWESCLQ…IALVIGSGKA (85 aa)) are domain I, interacts with DnaA modulators. The domain II stretch occupies residues 85–129 (ATAARIQATTTDSGQNAPANPATTSEKRTAASEKARGKGSNYEKS). Positions 93 to 108 (TTTDSGQNAPANPATT) are enriched in polar residues. The segment at 93–125 (TTTDSGQNAPANPATTSEKRTAASEKARGKGSN) is disordered. Residues 109–125 (SEKRTAASEKARGKGSN) are compositionally biased toward basic and acidic residues. Residues 130–346 (RLFPSFTFDN…GALKKVLAYS (217 aa)) form a domain III, AAA+ region region. Residues glycine 174, glycine 176, lysine 177, and threonine 178 each coordinate ATP. Positions 347–465 (SFHGRVIALD…LHVLLQVLKG (119 aa)) are domain IV, binds dsDNA.

Belongs to the DnaA family. In terms of assembly, oligomerizes as a right-handed, spiral filament on DNA at oriC.

It is found in the cytoplasm. Plays an essential role in the initiation and regulation of chromosomal replication. ATP-DnaA binds to the origin of replication (oriC) to initiate formation of the DNA replication initiation complex once per cell cycle. Binds the DnaA box (a 9 base pair repeat at the origin) and separates the double-stranded (ds)DNA. Forms a right-handed helical filament on oriC DNA; dsDNA binds to the exterior of the filament while single-stranded (ss)DNA is stabiized in the filament's interior. The ATP-DnaA-oriC complex binds and stabilizes one strand of the AT-rich DNA unwinding element (DUE), permitting loading of DNA polymerase. After initiation quickly degrades to an ADP-DnaA complex that is not apt for DNA replication. Binds acidic phospholipids. This is Chromosomal replication initiator protein DnaA from Dechloromonas aromatica (strain RCB).